Consider the following 363-residue polypeptide: Aminomethyltransferase (363 aa).

The protein belongs to the GcvT family. The glycine cleavage system is composed of four proteins: P, T, L and H.

The catalysed reaction is N(6)-[(R)-S(8)-aminomethyldihydrolipoyl]-L-lysyl-[protein] + (6S)-5,6,7,8-tetrahydrofolate = N(6)-[(R)-dihydrolipoyl]-L-lysyl-[protein] + (6R)-5,10-methylene-5,6,7,8-tetrahydrofolate + NH4(+). Its function is as follows. The glycine cleavage system catalyzes the degradation of glycine. The chain is Aminomethyltransferase from Nitrosomonas europaea (strain ATCC 19718 / CIP 103999 / KCTC 2705 / NBRC 14298).